We begin with the raw amino-acid sequence, 281 residues long: ATP phosphoribosyltransferase (281 aa).

It belongs to the ATP phosphoribosyltransferase family. Long subfamily. Requires Mg(2+) as cofactor.

It localises to the cytoplasm. It catalyses the reaction 1-(5-phospho-beta-D-ribosyl)-ATP + diphosphate = 5-phospho-alpha-D-ribose 1-diphosphate + ATP. The protein operates within amino-acid biosynthesis; L-histidine biosynthesis; L-histidine from 5-phospho-alpha-D-ribose 1-diphosphate: step 1/9. Its activity is regulated as follows. Feedback inhibited by histidine. Functionally, catalyzes the condensation of ATP and 5-phosphoribose 1-diphosphate to form N'-(5'-phosphoribosyl)-ATP (PR-ATP). Has a crucial role in the pathway because the rate of histidine biosynthesis seems to be controlled primarily by regulation of HisG enzymatic activity. The chain is ATP phosphoribosyltransferase from Kocuria rhizophila (strain ATCC 9341 / DSM 348 / NBRC 103217 / DC2201).